We begin with the raw amino-acid sequence, 137 residues long: Probable DNA-directed RNA polymerases I, II, and III subunit RPABC2 (137 aa).

Acidic residues-rich tracts occupy residues 1 to 27 and 34 to 43; these read MADEDDYQDMDNDDFVDDNEMEDVIEE and NEDEDDDNVD. The tract at residues 1 to 43 is disordered; sequence MADEDDYQDMDNDDFVDDNEMEDVIEEDPQRPDNEDEDDDNVD.

This sequence belongs to the archaeal Rpo6/eukaryotic RPB6 RNA polymerase subunit family. As to quaternary structure, component of the RNA polymerase I (Pol I), RNA polymerase II (Pol II) and RNA polymerase III (Pol III) complexes consisting of at least 13, 12 and 17 subunits, respectively.

It is found in the nucleus. Its function is as follows. DNA-dependent RNA polymerases catalyze the transcription of DNA into RNA using the four ribonucleoside triphosphates as substrates. Common component of RNA polymerases I, II and III which synthesize ribosomal RNA precursors, mRNA precursors and many functional non-coding RNAs, and small RNAs, such as 5S rRNA and tRNAs, respectively. Pol II is the central component of the basal RNA polymerase II transcription machinery. Pols are composed of mobile elements that move relative to each other. In Pol II, RPB6 is part of the clamp element and together with parts of RPB1 and RPB2 forms a pocket to which the RPB4-RPB7 subcomplex binds. The chain is Probable DNA-directed RNA polymerases I, II, and III subunit RPABC2 (rpb-6) from Caenorhabditis elegans.